Consider the following 1712-residue polypeptide: MAGAWLRWGLLLWAGLLAWSAHGRVRRITYVVRPGPGLPAGALPLAGPPRTFNVALDARYSRSSTAASSRALAGPPAERTRRTSQPGGAALPGLRSPLPPEPARPGGPSRQLHSKAGAQTAVTRFAKHGRQVVRSQVQQDAQSAGGSRLQVQQKQQLQGINVCGGQCCHGWSKPPGSQRCTKPSCVPPCQNGGMCLRPQLCVCKPGSKGKACEITAAQDTMPPAFGGQNPGSSWAPLEQAAKHTSTKKADTLPRVSPVAQMTLTLKPKPSMGLSQQIHPQVAPLSSQNVMIRHGQTQEYLLKPKYFPAPKVVSAEQSTEGSFSLRYGQEQGTAPFQVSNHTGRIKVVFTPSICKVTCTKGNCQNSCQKGNTTTLISENGHAADTLTATNFRVVICHLPCMNGGQCSSRDKCQCPPNFTGKLCQIPVLGASMPKLYQHAQQQGKALGSHVIHSTHTLPLTMTSQQGVKVKFPPNIVNIHVKHPPEASVQIHQVSRIDSPGGQKVKEAQPGQSQVSYQGLPVQKTQTVHSTYSHQQLIPHVYPVAAKTQLGRCFQETIGSQCGKALPGLSKQEDCCGTVGTSWGFNKCQKCPKKQSYHGYTQMMECLQGYKRVNNTFCQDINECQLQGVCPNGECLNTMGSYRCSCKMGFGPDPTFSSCVPDPPVISEEKGPCYRLVSPGRHCMHPLSVHLTKQICCCSVGKAWGPHCEKCPLPGTAAFKEICPGGMGYTVSGVHRRRPIHQHIGKEAVYVKPKNTQPVAKSTHPPPLPAKEEPVEALTSSWEHGPRGAEPEVVTAPPEKEIPSLDQEKTRLEPGQPQLSPGVSTIHLHPQFPVVVEKTSPPVPVEVAPEASTSSASQVIAPTQVTEINECTVNPDICGAGHCINLPVRYTCICYEGYKFSEQLRKCVDIDECAQVRHLCSQGRCENTEGSFLCVCPAGFMASEEGTNCIDVDECLRPDMCRDGRCINTAGAFRCEYCDSGYRMSRRGYCEDIDECLKPSTCPEEQCVNTPGSYQCVPCTEGFRGWNGQCLDVDECLQPKVCTNGSCTNLEGSYMCSCHRGYSPTPDHRHCQDIDECQQGNLCMNGQCRNTDGSFRCTCGQGYQLSAAKDQCEDIDECEHHHLCSHGQCRNTEGSFQCVCNQGYRASVLGDHCEDINECLEDSSVCQGGDCINTAGSYDCTCPDGFQLNDNKGCQDINECAQPGLCGSHGECLNTQGSFHCVCEQGFSISADGRTCEDIDECVNNTVCDSHGFCDNTAGSFRCLCYQGFQAPQDGQGCVDVNECELLSGVCGEAFCENVEGSFLCVCADENQEYSPMTGQCRSRVTEDSGVDRQPREEKKECYYNLNDASLCDNVLAPNVTKQECCCTSGAGWGDNCEIFPCPVQGTAEFTEMCPRGKGLVPAGESSYDTGGENYKDADECLLFGEEICKNGYCLNTQPGYECYCKQGTYYDPVKLQCFDMDECQDPNSCIDGQCVNTEGSYNCFCTHPMVLDASEKRCVQPTESNEQIEETDVYQDLCWEHLSEEYVCSRPLVGKQTTYTECCCLYGEAWGMQCALCPMKDSDDYAQLCNIPVTGRRRPYGRDALVDFSEQYGPETDPYFIQDRFLNSFEELQAEECGILNGCENGRCVRVQEGYTCDCFDGYHLDMAKMTCVDVNECSELNNRMSLCKNAKCINTEGSYKCLCLPGYIPSDKPNYCTPLNSALNLDKESDLE.

The first 23 residues, 1 to 23 (MAGAWLRWGLLLWAGLLAWSAHG), serve as a signal peptide directing secretion. The tract at residues 65-118 (TAASSRALAGPPAERTRRTSQPGGAALPGLRSPLPPEPARPGGPSRQLHSKAGA) is disordered. An EGF-like 1 domain is found at 181–213 (TKPSCVPPCQNGGMCLRPQLCVCKPGSKGKACE). Cystine bridges form between cysteine 185/cysteine 195, cysteine 189/cysteine 201, and cysteine 203/cysteine 212. Asparagine 339 and asparagine 370 each carry an N-linked (GlcNAc...) asparagine glycan. The EGF-like 2 domain maps to 391-423 (RVVICHLPCMNGGQCSSRDKCQCPPNFTGKLCQ). 6 disulfides stabilise this stretch: cysteine 395–cysteine 405, cysteine 399–cysteine 411, cysteine 413–cysteine 422, cysteine 551–cysteine 573, cysteine 560–cysteine 586, and cysteine 574–cysteine 589. The N-linked (GlcNAc...) asparagine glycan is linked to asparagine 416. The TB 1 domain occupies 549 to 601 (GRCFQETIGSQCGKALPGLSKQEDCCGTVGTSWGFNKCQKCPKKQSYHGYTQM). Residue asparagine 612 is glycosylated (N-linked (GlcNAc...) asparagine). The region spanning 618–658 (DINECQLQGVCPNGECLNTMGSYRCSCKMGFGPDPTFSSCV) is the EGF-like 3; calcium-binding domain. Intrachain disulfides connect cysteine 622–cysteine 633, cysteine 628–cysteine 642, cysteine 644–cysteine 657, cysteine 671–cysteine 694, cysteine 681–cysteine 706, cysteine 695–cysteine 709, and cysteine 696–cysteine 721. O-linked (Glc) serine glycosylation is present at serine 639. Positions 669–721 (GPCYRLVSPGRHCMHPLSVHLTKQICCCSVGKAWGPHCEKCPLPGTAAFKEIC) constitute a TB 2 domain. The disordered stretch occupies residues 753–799 (NTQPVAKSTHPPPLPAKEEPVEALTSSWEHGPRGAEPEVVTAPPEKE). Threonine 761 and threonine 793 each carry an O-linked (GalNAc...) threonine glycan. The region spanning 865–906 (EINECTVNPDICGAGHCINLPVRYTCICYEGYKFSEQLRKCV) is the EGF-like 4; calcium-binding domain. Disulfide bonds link cysteine 869–cysteine 881, cysteine 876–cysteine 890, cysteine 892–cysteine 905, cysteine 911–cysteine 923, cysteine 918–cysteine 932, cysteine 934–cysteine 947, cysteine 953–cysteine 964, cysteine 959–cysteine 973, cysteine 976–cysteine 988, cysteine 994–cysteine 1005, cysteine 1000–cysteine 1014, cysteine 1017–cysteine 1028, cysteine 1034–cysteine 1045, cysteine 1040–cysteine 1054, cysteine 1056–cysteine 1069, cysteine 1075–cysteine 1086, cysteine 1081–cysteine 1095, cysteine 1097–cysteine 1110, cysteine 1116–cysteine 1127, cysteine 1122–cysteine 1136, cysteine 1138–cysteine 1151, cysteine 1157–cysteine 1169, cysteine 1164–cysteine 1178, cysteine 1180–cysteine 1192, cysteine 1198–cysteine 1210, cysteine 1204–cysteine 1219, cysteine 1221–cysteine 1234, cysteine 1240–cysteine 1252, cysteine 1246–cysteine 1261, cysteine 1263–cysteine 1276, cysteine 1282–cysteine 1294, cysteine 1289–cysteine 1303, cysteine 1305–cysteine 1319, cysteine 1340–cysteine 1363, cysteine 1350–cysteine 1375, cysteine 1364–cysteine 1380, and cysteine 1365–cysteine 1392. The 42-residue stretch at 907 to 948 (DIDECAQVRHLCSQGRCENTEGSFLCVCPAGFMASEEGTNCI) folds into the EGF-like 5; calcium-binding domain. O-linked (Glc) serine glycosylation is present at serine 929. Positions 949–989 (DVDECLRPDMCRDGRCINTAGAFRCEYCDSGYRMSRRGYCE) constitute an EGF-like 6; calcium-binding domain. (3R)-3-hydroxyasparagine is present on asparagine 966. In terms of domain architecture, EGF-like 7; calcium-binding spans 990-1029 (DIDECLKPSTCPEEQCVNTPGSYQCVPCTEGFRGWNGQCL). Serine 1011 carries an O-linked (Glc) serine glycan. The EGF-like 8; calcium-binding domain occupies 1030 to 1070 (DVDECLQPKVCTNGSCTNLEGSYMCSCHRGYSPTPDHRHCQ). Asparagine 1042 carries an N-linked (GlcNAc...) asparagine glycan. Residue serine 1051 is glycosylated (O-linked (Glc) serine). The region spanning 1071–1111 (DIDECQQGNLCMNGQCRNTDGSFRCTCGQGYQLSAAKDQCE) is the EGF-like 9; calcium-binding domain. One can recognise an EGF-like 10; calcium-binding domain in the interval 1112–1152 (DIDECEHHHLCSHGQCRNTEGSFQCVCNQGYRASVLGDHCE). The residue at position 1129 (asparagine 1129) is a (3R)-3-hydroxyasparagine. An O-linked (Glc) serine glycan is attached at serine 1133. The EGF-like 11; calcium-binding domain maps to 1153–1193 (DINECLEDSSVCQGGDCINTAGSYDCTCPDGFQLNDNKGCQ). The 42-residue stretch at 1194–1235 (DINECAQPGLCGSHGECLNTQGSFHCVCEQGFSISADGRTCE) folds into the EGF-like 12; calcium-binding domain. An O-linked (Glc) serine glycan is attached at serine 1216. In terms of domain architecture, EGF-like 13; calcium-binding spans 1236–1277 (DIDECVNNTVCDSHGFCDNTAGSFRCLCYQGFQAPQDGQGCV). Asparagine 1242 carries an N-linked (GlcNAc...) asparagine glycan. Positions 1278–1320 (DVNECELLSGVCGEAFCENVEGSFLCVCADENQEYSPMTGQCR) constitute an EGF-like 14; calcium-binding domain. The 8-Cys3 region stretch occupies residues 1335–1402 (EEKKECYYNL…PRGKGLVPAG (68 aa)). One can recognise a TB 3 domain in the interval 1338 to 1392 (KECYYNLNDASLCDNVLAPNVTKQECCCTSGAGWGDNCEIFPCPVQGTAEFTEMC). An N-linked (GlcNAc...) asparagine glycan is attached at asparagine 1357. Serine 1405 bears the Phosphoserine mark. Positions 1415–1457 (DADECLLFGEEICKNGYCLNTQPGYECYCKQGTYYDPVKLQCF) constitute an EGF-like 15; calcium-binding domain. 10 disulfide bridges follow: cysteine 1419/cysteine 1432, cysteine 1427/cysteine 1441, cysteine 1443/cysteine 1456, cysteine 1462/cysteine 1473, cysteine 1468/cysteine 1482, cysteine 1484/cysteine 1497, cysteine 1517/cysteine 1541, cysteine 1527/cysteine 1553, cysteine 1542/cysteine 1556, and cysteine 1543/cysteine 1568. Residues 1458–1498 (DMDECQDPNSCIDGQCVNTEGSYNCFCTHPMVLDASEKRCV) form the EGF-like 16; calcium-binding domain. Serine 1479 carries an O-linked (Glc) serine glycan. The segment at 1498 to 1712 (VQPTESNEQI…LNLDKESDLE (215 aa)) is C-terminal domain. One can recognise a TB 4 domain in the interval 1515 to 1568 (DLCWEHLSEEYVCSRPLVGKQTTYTECCCLYGEAWGMQCALCPMKDSDDYAQLC). 2 positions are modified to phosphoserine: serine 1588 and serine 1607. The EGF-like 17 domain occupies 1612–1652 (QAEECGILNGCENGRCVRVQEGYTCDCFDGYHLDMAKMTCV). 6 cysteine pairs are disulfide-bonded: cysteine 1616/cysteine 1627, cysteine 1622/cysteine 1636, cysteine 1638/cysteine 1651, cysteine 1657/cysteine 1672, cysteine 1667/cysteine 1681, and cysteine 1683/cysteine 1696. The 45-residue stretch at 1653 to 1697 (DVNECSELNNRMSLCKNAKCINTEGSYKCLCLPGYIPSDKPNYCT) folds into the EGF-like 18; calcium-binding domain. A glycan (O-linked (Glc) serine) is linked at serine 1678.

It belongs to the LTBP family. Interacts with TGFB1; associates via disulfide bonds with the Latency-associated peptide chain (LAP) regulatory chain of TGFB1, leading to regulate activation of TGF-beta-1. LTBP1 does not bind directly to TGF-beta-1, the active chain of TGFB1. Interacts (via C-terminal domain) with FBN1 (via N-terminal domain). Interacts with FBN2. Interacts with ADAMTSL2. Interacts with EFEMP2. Post-translationally, contains hydroxylated asparagine residues. In terms of processing, two intrachain disulfide bonds from the TB3 domain are rearranged upon TGFB1 binding, and form interchain bonds with TGFB1 propeptide, anchoring it to the extracellular matrix. O-glycosylated on serine residues by POGLUT2 and POGLUT3.

It is found in the secreted. Its subcellular location is the extracellular space. The protein localises to the extracellular matrix. Its function is as follows. Key regulator of transforming growth factor beta (TGFB1, TGFB2 and TGFB3) that controls TGF-beta activation by maintaining it in a latent state during storage in extracellular space. Associates specifically via disulfide bonds with the Latency-associated peptide (LAP), which is the regulatory chain of TGF-beta, and regulates integrin-dependent activation of TGF-beta. Outcompeted by LRRC32/GARP for binding to LAP regulatory chain of TGF-beta. This Mus musculus (Mouse) protein is Latent-transforming growth factor beta-binding protein 1.